The sequence spans 586 residues: MCGILAVLGCSDDSQAKRVRVLELSRRLKHRGPDWSGLHQHGDNFLAHQRLAIVDPASGDQPLFNEDQSIIVTVNGEIFNHEELRKQLPNHKFRTGCDCDVIAHLYEEHGENFVDMLDGIFSFVLLDTRDNSFLVARDAIGVTSLYIGYGLDGSVWIASELKGLNDDCEHFELFPPGHLYSSKEKEFRRWYNPPWFSEAIPSAPYDPLALRQAFEKAIIKRLMTDVPFGVLLSGGLDSSLVASVTARYLADTKAAKQWGSKLHSFCVGLEGAPDLKAAREVADYIGTVHHEFQYTIQDGIDAIEDVIYHVETYDVTTIRAGTPMFLMSRKIKSLGVKMVLSGEGSDEIFAGYLYFHKAPNKEELHQETCSKIKALHKYDCLRANKSTYAWGLEARVPFLDKKFIDVAMGIDPENKMIKRDEGRIEKWVLRKAFDDEENPYLPKHILYRQKEQFSDGVGYGWIDGLKDHAAKHVTDKMMLNASNIYPFNTPNTKEAYYYRMIFERFFPQNSARLSVPGGASIACSTEKAIEWDAAWSNNLDPSGRAALGVHDSAYDDQLNKSVSKGVEPEKIIPKMEVSPLGVAILS.

Cys2 functions as the For GATase activity in the catalytic mechanism. The 184-residue stretch at 2–185 (CGILAVLGCS…PGHLYSSKEK (184 aa)) folds into the Glutamine amidotransferase type-2 domain. L-glutamine contacts are provided by residues 50-54 (RLAIV), 75-77 (NGE), and Asp98. The Asparagine synthetase domain occupies 193-516 (PPWFSEAIPS…PQNSARLSVP (324 aa)). Residues Leu231, Val267, and 341–342 (SG) each bind ATP.

The enzyme catalyses L-aspartate + L-glutamine + ATP + H2O = L-asparagine + L-glutamate + AMP + diphosphate + H(+). It participates in amino-acid biosynthesis; L-asparagine biosynthesis; L-asparagine from L-aspartate (L-Gln route): step 1/1. This Lotus japonicus (Lotus corniculatus var. japonicus) protein is Asparagine synthetase [glutamine-hydrolyzing] 2 (AS2).